The primary structure comprises 68 residues: Beta-defensin 1 (68 aa).

The first 21 residues, 1–21 (MRTSYLLLFTLCLLLSEMASG), serve as a signal peptide directing secretion. The propeptide occupies 22 to 32 (DNFLTGLGHRS). Disulfide bonds link cysteine 37-cysteine 66, cysteine 44-cysteine 59, and cysteine 49-cysteine 67.

Belongs to the beta-defensin family. Monomer. Homodimer.

Its subcellular location is the secreted. It localises to the membrane. Its function is as follows. Has bactericidal activity. May act as a ligand for C-C chemokine receptor CCR6. Positively regulates the sperm motility and bactericidal activity in a CCR6-dependent manner. Binds to CCR6 and triggers Ca2+ mobilization in the sperm which is important for its motility. The sequence is that of Beta-defensin 1 (DEFB1) from Macaca mulatta (Rhesus macaque).